The sequence spans 485 residues: ATP synthase subunit beta, cyanelle (485 aa).

ATP is bound at residue 162–169 (GGAGVGKT).

Belongs to the ATPase alpha/beta chains family. F-type ATPases have 2 components, CF(1) - the catalytic core - and CF(0) - the membrane proton channel. CF(1) has five subunits: alpha(3), beta(3), gamma(1), delta(1), epsilon(1). CF(0) has four main subunits: a(1), b(1), b'(1) and c(9-12).

It localises to the plastid. The protein localises to the cyanelle thylakoid membrane. The catalysed reaction is ATP + H2O + 4 H(+)(in) = ADP + phosphate + 5 H(+)(out). Its function is as follows. Produces ATP from ADP in the presence of a proton gradient across the membrane. The catalytic sites are hosted primarily by the beta subunits. The sequence is that of ATP synthase subunit beta, cyanelle from Cyanophora paradoxa.